The sequence spans 411 residues: UPF0761 membrane protein PLES_43641 (411 aa).

6 consecutive transmembrane segments (helical) span residues 36-56 (LFAV…IPAF), 92-112 (HLTW…LVTI), 132-152 (FLLY…GFAV), 174-194 (LLGL…YSAV), 207-229 (GGVF…VSLF), and 244-264 (IFLL…VLVC).

It belongs to the UPF0761 family.

The protein localises to the cell inner membrane. The polypeptide is UPF0761 membrane protein PLES_43641 (Pseudomonas aeruginosa (strain LESB58)).